A 427-amino-acid polypeptide reads, in one-letter code: Gamma-glutamyl phosphate reductase (427 aa).

This sequence belongs to the gamma-glutamyl phosphate reductase family.

It localises to the cytoplasm. It catalyses the reaction L-glutamate 5-semialdehyde + phosphate + NADP(+) = L-glutamyl 5-phosphate + NADPH + H(+). The protein operates within amino-acid biosynthesis; L-proline biosynthesis; L-glutamate 5-semialdehyde from L-glutamate: step 2/2. Its function is as follows. Catalyzes the NADPH-dependent reduction of L-glutamate 5-phosphate into L-glutamate 5-semialdehyde and phosphate. The product spontaneously undergoes cyclization to form 1-pyrroline-5-carboxylate. The chain is Gamma-glutamyl phosphate reductase from Brucella ovis (strain ATCC 25840 / 63/290 / NCTC 10512).